The sequence spans 444 residues: Multidrug resistance protein MdtA (444 aa).

The signal sequence occupies residues 1-20; that stretch reads MKSQSKRTSRLFVFVGVVVA. Positions 37 to 52 are enriched in polar residues; it reads NNTSGAQQSARGQDTS. Disordered regions lie at residues 37-60 and 398-444; these read NNTS…RNTP and TPRS…AEKS. Over residues 409 to 419 the composition is skewed to low complexity; sequence ASAEKAAAEAE. Over residues 435–444 the composition is skewed to polar residues; sequence ARSTTAAEKS.

Belongs to the membrane fusion protein (MFP) (TC 8.A.1) family. As to quaternary structure, part of a tripartite efflux system composed of MdtA, MdtB and MdtC.

It is found in the cell inner membrane. This Yersinia pseudotuberculosis serotype O:3 (strain YPIII) protein is Multidrug resistance protein MdtA.